A 479-amino-acid chain; its full sequence is Chromosomal replication initiator protein DnaA (479 aa).

Residues 1 to 71 (MNLTQIWKAT…RNALARVVGY (71 aa)) form a domain I, interacts with DnaA modulators region. The interval 71–138 (YPVQVQVLIA…LDLASAMRSG (68 aa)) is domain II. Polar residues predominate over residues 86–99 (TEPSPSLTLSNGSR). Residues 86 to 106 (TEPSPSLTLSNGSRLMSDPEP) form a disordered region. The domain III, AAA+ region stretch occupies residues 139–355 (MLNPRYTFSS…GSLNRVAAYA (217 aa)). The ATP site is built by Gly-183, Gly-185, Lys-186, and Thr-187. Residues 356–479 (ELNRAPITIE…IRERIQMLRG (124 aa)) form a domain IV, binds dsDNA region.

Belongs to the DnaA family. As to quaternary structure, oligomerizes as a right-handed, spiral filament on DNA at oriC.

It is found in the cytoplasm. Its function is as follows. Plays an essential role in the initiation and regulation of chromosomal replication. ATP-DnaA binds to the origin of replication (oriC) to initiate formation of the DNA replication initiation complex once per cell cycle. Binds the DnaA box (a 9 base pair repeat at the origin) and separates the double-stranded (ds)DNA. Forms a right-handed helical filament on oriC DNA; dsDNA binds to the exterior of the filament while single-stranded (ss)DNA is stabiized in the filament's interior. The ATP-DnaA-oriC complex binds and stabilizes one strand of the AT-rich DNA unwinding element (DUE), permitting loading of DNA polymerase. After initiation quickly degrades to an ADP-DnaA complex that is not apt for DNA replication. Binds acidic phospholipids. This is Chromosomal replication initiator protein DnaA from Chloroflexus aurantiacus (strain ATCC 29366 / DSM 635 / J-10-fl).